We begin with the raw amino-acid sequence, 434 residues long: Tol-Pal system protein TolB (434 aa).

Residues 1 to 28 (MMNTRVWCKIIGMLALLVWLVSSPSVFA) form the signal peptide.

It belongs to the TolB family. In terms of assembly, the Tol-Pal system is composed of five core proteins: the inner membrane proteins TolA, TolQ and TolR, the periplasmic protein TolB and the outer membrane protein Pal. They form a network linking the inner and outer membranes and the peptidoglycan layer.

The protein resides in the periplasm. Its function is as follows. Part of the Tol-Pal system, which plays a role in outer membrane invagination during cell division and is important for maintaining outer membrane integrity. This is Tol-Pal system protein TolB from Nitrosococcus oceani (strain ATCC 19707 / BCRC 17464 / JCM 30415 / NCIMB 11848 / C-107).